The chain runs to 319 residues: ADTYAATRYPVILVHGLAGTDKFANVVDYWYGIQSDLQSHGAKVYVANLSGFQSDDGPNGRGEQLLAYVKQVLAATGATKVNLIGHSQGGLTSRYVAAVAPQLVASVTTIGTPHRGSEFADFVQDVLKTDPTGLSSTVIAAFVNVFGTLVSSSHNTDQDALAALRTLTTAQTATYNRNFPSAGLGAPGSCQTGAATETVGGSQHLLYSWGGTAIQPTSTVLGVTGATDTSTGTLDVANVTDPSTLALLATGAVMINRASGQNDGLVSRCSSLFGQVISTSYHWNHLDEINQLLGVRGANAEDPVAVIRTHVNRLKLQGV.

Residues 10 to 288 enclose the AB hydrolase-1 domain; sequence PVILVHGLAG…TSYHWNHLDE (279 aa). Position 17 (leucine 17) interacts with substrate. Residue serine 87 is the Nucleophile of the active site. Glutamine 88 is a substrate binding site. The cysteines at positions 190 and 269 are disulfide-linked. Aspartate 241 serves as a coordination point for Ca(2+). Residues aspartate 263 and histidine 285 each act as charge relay system in the active site. 3 residues coordinate Ca(2+): aspartate 287, glutamine 291, and valine 295.

The protein belongs to the AB hydrolase superfamily. Pseudomonas lipase family. As to quaternary structure, monomer. Interacts with lipase-specific foldase Lif. The cofactor is Ca(2+).

Its subcellular location is the secreted. The catalysed reaction is a triacylglycerol + H2O = a diacylglycerol + a fatty acid + H(+). Its function is as follows. Catalyzes the hydrolysis of triacylglycerol. This chain is Triacylglycerol lipase, found in Pseudarthrobacter phenanthrenivorans (Arthrobacter phenanthrenivorans).